A 170-amino-acid polypeptide reads, in one-letter code: Peptide methionine sulfoxide reductase MsrA (170 aa).

The active site involves Cys-14.

The protein belongs to the MsrA Met sulfoxide reductase family.

It carries out the reaction L-methionyl-[protein] + [thioredoxin]-disulfide + H2O = L-methionyl-(S)-S-oxide-[protein] + [thioredoxin]-dithiol. The enzyme catalyses [thioredoxin]-disulfide + L-methionine + H2O = L-methionine (S)-S-oxide + [thioredoxin]-dithiol. In terms of biological role, has an important function as a repair enzyme for proteins that have been inactivated by oxidation. Catalyzes the reversible oxidation-reduction of methionine sulfoxide in proteins to methionine. In Streptomyces avermitilis (strain ATCC 31267 / DSM 46492 / JCM 5070 / NBRC 14893 / NCIMB 12804 / NRRL 8165 / MA-4680), this protein is Peptide methionine sulfoxide reductase MsrA.